Consider the following 145-residue polypeptide: Bacilliredoxin MW1318 (145 aa).

This sequence belongs to the bacilliredoxin family.

The polypeptide is Bacilliredoxin MW1318 (Staphylococcus aureus (strain MW2)).